The primary structure comprises 347 residues: Phospho-N-acetylmuramoyl-pentapeptide-transferase (347 aa).

Helical transmembrane passes span 10-30, 67-87, 91-111, 127-147, 164-184, 195-215, 220-240, 250-270, 275-295, and 325-345; these read SLVF…IFLG, AGGI…LPLG, TWLF…DDIV, FVLQ…IYKG, LGHS…AIVG, LDGL…VVAV, IPLA…SLAF, VFMG…CAVM, LLLI…ILQI, and VVKR…IAAL.

It belongs to the glycosyltransferase 4 family. MraY subfamily. It depends on Mg(2+) as a cofactor.

The protein localises to the cell inner membrane. The catalysed reaction is UDP-N-acetyl-alpha-D-muramoyl-L-alanyl-gamma-D-glutamyl-meso-2,6-diaminopimeloyl-D-alanyl-D-alanine + di-trans,octa-cis-undecaprenyl phosphate = di-trans,octa-cis-undecaprenyl diphospho-N-acetyl-alpha-D-muramoyl-L-alanyl-D-glutamyl-meso-2,6-diaminopimeloyl-D-alanyl-D-alanine + UMP. It functions in the pathway cell wall biogenesis; peptidoglycan biosynthesis. Its function is as follows. Catalyzes the initial step of the lipid cycle reactions in the biosynthesis of the cell wall peptidoglycan: transfers peptidoglycan precursor phospho-MurNAc-pentapeptide from UDP-MurNAc-pentapeptide onto the lipid carrier undecaprenyl phosphate, yielding undecaprenyl-pyrophosphoryl-MurNAc-pentapeptide, known as lipid I. This chain is Phospho-N-acetylmuramoyl-pentapeptide-transferase, found in Chlamydia abortus (strain DSM 27085 / S26/3) (Chlamydophila abortus).